The chain runs to 174 residues: Adenine phosphoribosyltransferase (174 aa).

Belongs to the purine/pyrimidine phosphoribosyltransferase family. In terms of assembly, homodimer.

It localises to the cytoplasm. The enzyme catalyses AMP + diphosphate = 5-phospho-alpha-D-ribose 1-diphosphate + adenine. It functions in the pathway purine metabolism; AMP biosynthesis via salvage pathway; AMP from adenine: step 1/1. Its function is as follows. Catalyzes a salvage reaction resulting in the formation of AMP, that is energically less costly than de novo synthesis. The chain is Adenine phosphoribosyltransferase from Dichelobacter nodosus (strain VCS1703A).